We begin with the raw amino-acid sequence, 462 residues long: MTESVSKPVRPRAAVILAAGQGTRMKSPTPKVLHRLAGRTLLDHAIDAAEGLGCERIIVVVGAHSPQVGESARKRLGPDATVIQDPPLGTGHAVLAAKDALADFHGDVVVTYADCPLTTAPVIAPLFDLITHVAHVAVLGFEAQNPTGYGRLILAPGHVLLRIVEEKEADLATKQVKHCNSGVLAADRAVLFDLLANVRNDNAKGEYYLTDVVGLAHERHLSTRTAFAPEASVQGVNAQAELAAAEAVWQQNRRKALMVDGVTMPAPDTVHLAWDTQIAGGAVVEQFVVFGPGVSVASGAVIKAFSHLEGAVVGEGALIGPYARLRPGAEIGPDAHIGNFVEVKKVKVGAGAKANHLSYLGDGSVGEKANIGAGTIFCNYDGFEKFETHVGKGAFIGSNSALVAPVRVGDGAMTGSGSVITKDVEDGALALSRADQTSKAGWATKFRAIKQAQKDKKKDKKA.

The pyrophosphorylase stretch occupies residues 1 to 239 (MTESVSKPVR…EASVQGVNAQ (239 aa)). Residues 17 to 20 (LAAG), Lys31, Gln84, and 89 to 90 (GT) each bind UDP-N-acetyl-alpha-D-glucosamine. Asp114 contacts Mg(2+). Positions 150, 165, 180, and 237 each coordinate UDP-N-acetyl-alpha-D-glucosamine. Asn237 is a binding site for Mg(2+). A linker region spans residues 240–260 (AELAAAEAVWQQNRRKALMVD). The N-acetyltransferase stretch occupies residues 261-462 (GVTMPAPDTV…QKDKKKDKKA (202 aa)). Positions 326 and 344 each coordinate UDP-N-acetyl-alpha-D-glucosamine. His356 (proton acceptor) is an active-site residue. The UDP-N-acetyl-alpha-D-glucosamine site is built by Tyr359 and Asn370. Acetyl-CoA is bound by residues Ala373, 379–380 (NY), Ser398, Ser416, and Arg433.

The protein in the N-terminal section; belongs to the N-acetylglucosamine-1-phosphate uridyltransferase family. In the C-terminal section; belongs to the transferase hexapeptide repeat family. As to quaternary structure, homotrimer. It depends on Mg(2+) as a cofactor.

Its subcellular location is the cytoplasm. The enzyme catalyses alpha-D-glucosamine 1-phosphate + acetyl-CoA = N-acetyl-alpha-D-glucosamine 1-phosphate + CoA + H(+). It catalyses the reaction N-acetyl-alpha-D-glucosamine 1-phosphate + UTP + H(+) = UDP-N-acetyl-alpha-D-glucosamine + diphosphate. It participates in nucleotide-sugar biosynthesis; UDP-N-acetyl-alpha-D-glucosamine biosynthesis; N-acetyl-alpha-D-glucosamine 1-phosphate from alpha-D-glucosamine 6-phosphate (route II): step 2/2. It functions in the pathway nucleotide-sugar biosynthesis; UDP-N-acetyl-alpha-D-glucosamine biosynthesis; UDP-N-acetyl-alpha-D-glucosamine from N-acetyl-alpha-D-glucosamine 1-phosphate: step 1/1. The protein operates within bacterial outer membrane biogenesis; LPS lipid A biosynthesis. Its function is as follows. Catalyzes the last two sequential reactions in the de novo biosynthetic pathway for UDP-N-acetylglucosamine (UDP-GlcNAc). The C-terminal domain catalyzes the transfer of acetyl group from acetyl coenzyme A to glucosamine-1-phosphate (GlcN-1-P) to produce N-acetylglucosamine-1-phosphate (GlcNAc-1-P), which is converted into UDP-GlcNAc by the transfer of uridine 5-monophosphate (from uridine 5-triphosphate), a reaction catalyzed by the N-terminal domain. This chain is Bifunctional protein GlmU, found in Caulobacter vibrioides (strain ATCC 19089 / CIP 103742 / CB 15) (Caulobacter crescentus).